A 926-amino-acid chain; its full sequence is Thyroid peroxidase (926 aa).

An N-terminal signal peptide occupies residues 1–14 (MGARAVLGVTLAVA). Topologically, residues 19 to 844 (FFASILRRKD…TCVDAGRLPR (826 aa)) are extracellular. An N-linked (GlcNAc...) asparagine glycan is attached at Asn-129. A disulfide bridge connects residues Cys-142 and Cys-158. Residue Asp-238 coordinates heme b. The active-site Proton acceptor is His-239. Asp-240 lines the Ca(2+) pocket. 2 disulfide bridges follow: Cys-259/Cys-269 and Cys-263/Cys-286. Asn-277 and Asn-307 each carry an N-linked (GlcNAc...) asparagine glycan. Ca(2+) contacts are provided by Thr-321, Phe-323, Asp-325, and Ser-327. Asn-342 is a glycosylation site (N-linked (GlcNAc...) asparagine). The heme b site is built by Glu-398 and His-493. Disulfide bonds link Cys-596/Cys-653, Cys-694/Cys-719, Cys-740/Cys-780, Cys-766/Cys-792, Cys-798/Cys-812, Cys-806/Cys-821, and Cys-823/Cys-836. The Sushi domain occupies 738-793 (DACGFPDPVEDGGFLLCEERGQRVLVFSCRHGFRLRGPAQITCTPRGWDSPPPLCK). Residues 794–837 (DINECEDETDPPCHASARCKNTKGGVLCECSDPLVLGEDGRTCV) enclose the EGF-like; calcium-binding domain. A helical transmembrane segment spans residues 845-869 (ASVVSIALGAVLVCGLAGLAWTVVC). At 870 to 926 (RWTHADARPLLPVGEGEGDGKSPSLPLPGCGNRRDVGAAPALEVEQDLSCGSRGLCE) the chain is on the cytoplasmic side.

This sequence belongs to the peroxidase family. XPO subfamily. Interacts with DUOX1, DUOX2 and CYBA. Ca(2+) is required as a cofactor. Requires heme b as cofactor. Post-translationally, heme is covalently bound through a H(2)O(2)-dependent autocatalytic process. Heme insertion is important for the delivery of protein at the cell surface. Cleaved in its N-terminal part. In terms of processing, N-glycosylated; contains mannose and N-acetylglucosamine.

The protein localises to the membrane. It carries out the reaction 2 iodide + H2O2 + 2 H(+) = diiodine + 2 H2O. The enzyme catalyses [thyroglobulin]-L-tyrosine + iodide + H2O2 + H(+) = [thyroglobulin]-3-iodo-L-tyrosine + 2 H2O. The catalysed reaction is [thyroglobulin]-3-iodo-L-tyrosine + iodide + H2O2 + H(+) = [thyroglobulin]-3,5-diiodo-L-tyrosine + 2 H2O. It catalyses the reaction 2 [thyroglobulin]-3,5-diiodo-L-tyrosine + H2O2 = [thyroglobulin]-L-thyroxine + [thyroglobulin]-dehydroalanine + 2 H2O. It carries out the reaction [thyroglobulin]-3-iodo-L-tyrosine + [thyroglobulin]-3,5-diiodo-L-tyrosine + H2O2 = [thyroglobulin]-3,3',5-triiodo-L-thyronine + [thyroglobulin]-dehydroalanine + 2 H2O. Its pathway is hormone biosynthesis; thyroid hormone biosynthesis. In terms of biological role, iodination and coupling of the hormonogenic tyrosines in thyroglobulin to yield the thyroid hormones T(3) and T(4). The sequence is that of Thyroid peroxidase (TPO) from Sus scrofa (Pig).